Reading from the N-terminus, the 405-residue chain is MTLADKPVLSHAVKKLLTNQYIDYVRVIINRNHEDFYRETIDSLHNYYLSEAVHSFQYVTLKSRKKEEWIPVSSTGMKGRVDTKLLSPVYGGKSRQNSVKLGLESLQKINPDFVVIHDACRPFVSNTLINNLARSMINNQHTGVVPAIEVEDTISLVNDDLIESTIPRERLRAIQTPQIFNFKELLSYHRSNKEFTDDSSLMVEHKKRVVVTRGEKINFKLTTKEDINMAKLLLDEPKYRVGTGYDIHRFIKAQGKAKSFIKICGVEIEYDMKIEAHSDGDVAIHAVVDAILGALGCGDIGAHFPPSFPEWKDRNSSHFLDFAAKKAKEKGYSVSNLDITIVCEEPKISPYKVAMKKFISKTLEIDSEFVNVKATTTEKLGSIGRNEGILAHASVLLYKIAPLHN.

The segment at 1 to 240 (MTLADKPVLS…KLLLDEPKYR (240 aa)) is 2-C-methyl-D-erythritol 4-phosphate cytidylyltransferase. Residues 240–405 (RVGTGYDIHR…LLYKIAPLHN (166 aa)) are 2-C-methyl-D-erythritol 2,4-cyclodiphosphate synthase. 2 residues coordinate a divalent metal cation: Asp246 and His248. Residues 246–248 (DIH) and 277–278 (HS) contribute to the 4-CDP-2-C-methyl-D-erythritol 2-phosphate site. His285 is a binding site for a divalent metal cation. 4-CDP-2-C-methyl-D-erythritol 2-phosphate is bound by residues 299 to 301 (DIG), 375 to 378 (TTTE), and Arg385.

In the N-terminal section; belongs to the IspD/TarI cytidylyltransferase family. IspD subfamily. This sequence in the C-terminal section; belongs to the IspF family. A divalent metal cation serves as cofactor.

It catalyses the reaction 2-C-methyl-D-erythritol 4-phosphate + CTP + H(+) = 4-CDP-2-C-methyl-D-erythritol + diphosphate. It carries out the reaction 4-CDP-2-C-methyl-D-erythritol 2-phosphate = 2-C-methyl-D-erythritol 2,4-cyclic diphosphate + CMP. It participates in isoprenoid biosynthesis; isopentenyl diphosphate biosynthesis via DXP pathway; isopentenyl diphosphate from 1-deoxy-D-xylulose 5-phosphate: step 2/6. Its pathway is isoprenoid biosynthesis; isopentenyl diphosphate biosynthesis via DXP pathway; isopentenyl diphosphate from 1-deoxy-D-xylulose 5-phosphate: step 4/6. In terms of biological role, bifunctional enzyme that catalyzes the formation of 4-diphosphocytidyl-2-C-methyl-D-erythritol from CTP and 2-C-methyl-D-erythritol 4-phosphate (MEP) (IspD), and catalyzes the conversion of 4-diphosphocytidyl-2-C-methyl-D-erythritol 2-phosphate (CDP-ME2P) to 2-C-methyl-D-erythritol 2,4-cyclodiphosphate (ME-CPP) with a corresponding release of cytidine 5-monophosphate (CMP) (IspF). In Wolbachia sp. subsp. Brugia malayi (strain TRS), this protein is Bifunctional enzyme IspD/IspF.